We begin with the raw amino-acid sequence, 902 residues long: 3'-5' exonuclease DinG (902 aa).

In terms of domain architecture, Exonuclease spans 8 to 161 (VVDLETTGNQ…DEDATTTAKL (154 aa)). The 256-residue stretch at 241–496 (KNVTQSLNLT…KAVDKLEQQR (256 aa)) folds into the Helicase ATP-binding domain. 276–283 (APLGSGKS) contacts ATP. Positions 448 to 451 (DEAH) match the DEAH box motif. A Helicase C-terminal domain is found at 714–883 (YIVEYITVTQ…HFKQRKGNIK (170 aa)).

The protein belongs to the helicase family. DinG subfamily. Type 2 sub-subfamily.

3'-5' exonuclease. The polypeptide is 3'-5' exonuclease DinG (Staphylococcus epidermidis (strain ATCC 35984 / DSM 28319 / BCRC 17069 / CCUG 31568 / BM 3577 / RP62A)).